The primary structure comprises 37 residues: Omega-agatoxin-Aa3d (37 aa).

The protein belongs to the neurotoxin 04 (omega-agtx) family. 03 (type II/III omega-agtx) subfamily. Post-translationally, disulfide bonds are present. In terms of tissue distribution, expressed by the venom gland.

It is found in the secreted. In terms of biological role, omega-agatoxins are antagonists of voltage-gated calcium channels. This toxin blocks calcium channels in insect central neurons but not at peripheral neuromuscular junctions. In vertebrates, it is broadly active against all high-threshold Cav1/CACNA1 channels and Cav2.2/CACNA1B channels. This Agelenopsis aperta (North American funnel-web spider) protein is Omega-agatoxin-Aa3d.